The primary structure comprises 219 residues: Thiamine-phosphate synthase (219 aa).

4-amino-2-methyl-5-(diphosphooxymethyl)pyrimidine is bound by residues 44–48 (QFREK) and asparagine 79. Residues aspartate 80 and aspartate 99 each coordinate Mg(2+). Serine 117 lines the 4-amino-2-methyl-5-(diphosphooxymethyl)pyrimidine pocket. 143–145 (TST) provides a ligand contact to 2-[(2R,5Z)-2-carboxy-4-methylthiazol-5(2H)-ylidene]ethyl phosphate. Lysine 146 is a 4-amino-2-methyl-5-(diphosphooxymethyl)pyrimidine binding site. Residues glycine 175 and 195 to 196 (IS) each bind 2-[(2R,5Z)-2-carboxy-4-methylthiazol-5(2H)-ylidene]ethyl phosphate.

Belongs to the thiamine-phosphate synthase family. Mg(2+) is required as a cofactor.

The enzyme catalyses 2-[(2R,5Z)-2-carboxy-4-methylthiazol-5(2H)-ylidene]ethyl phosphate + 4-amino-2-methyl-5-(diphosphooxymethyl)pyrimidine + 2 H(+) = thiamine phosphate + CO2 + diphosphate. It catalyses the reaction 2-(2-carboxy-4-methylthiazol-5-yl)ethyl phosphate + 4-amino-2-methyl-5-(diphosphooxymethyl)pyrimidine + 2 H(+) = thiamine phosphate + CO2 + diphosphate. The catalysed reaction is 4-methyl-5-(2-phosphooxyethyl)-thiazole + 4-amino-2-methyl-5-(diphosphooxymethyl)pyrimidine + H(+) = thiamine phosphate + diphosphate. It functions in the pathway cofactor biosynthesis; thiamine diphosphate biosynthesis; thiamine phosphate from 4-amino-2-methyl-5-diphosphomethylpyrimidine and 4-methyl-5-(2-phosphoethyl)-thiazole: step 1/1. Functionally, condenses 4-methyl-5-(beta-hydroxyethyl)thiazole monophosphate (THZ-P) and 2-methyl-4-amino-5-hydroxymethyl pyrimidine pyrophosphate (HMP-PP) to form thiamine monophosphate (TMP). This is Thiamine-phosphate synthase from Bacillus cereus (strain ZK / E33L).